Reading from the N-terminus, the 443-residue chain is MFLAQEIIRKKRNGEVLSTQEIQFFVQGITNNTVSEGQIAALGMAVYFKDMNMDERIALTTAMRDSGTVLNWKNLGLDGPIIDKHSTGGVGDVISLMLGPMAAACGGYVPMISGRGLGHTGGTLDKFDAIPGYQTEPDSDLFRKVVKEAGVAIIGQTGDLVPADKRFYSIRDNTATVESISLITASILSKKLAAGLDALAMDVKVGSGAFMPTYEASEELARSITAVANGAGTKTTALLTDMNQVLASCAGNAVEVKEAVDFLTGAYRNPRLYEVTMGLCAEMLQLGGLAASEADAREKLNRVLDNGKAADIFGRMIAGLGGPADFIENYAKYLPQSQIIRPVYADRSGFAASMDTRELGLAVVTLGGGRRKPGDALDYSVGLTQVCALGDEITSDKPIAMVHAQSESAFEEAAAAVKKAIHIGDEAPEKTPEIYRYIRQSDL.

This sequence belongs to the thymidine/pyrimidine-nucleoside phosphorylase family. As to quaternary structure, homodimer.

It catalyses the reaction thymidine + phosphate = 2-deoxy-alpha-D-ribose 1-phosphate + thymine. Its pathway is pyrimidine metabolism; dTMP biosynthesis via salvage pathway; dTMP from thymine: step 1/2. Functionally, the enzymes which catalyze the reversible phosphorolysis of pyrimidine nucleosides are involved in the degradation of these compounds and in their utilization as carbon and energy sources, or in the rescue of pyrimidine bases for nucleotide synthesis. The chain is Thymidine phosphorylase from Shewanella loihica (strain ATCC BAA-1088 / PV-4).